The chain runs to 131 residues: MSMSDPIADMLTRIRNAQGVQKASVVMPSSKLKAAIAKVLKDEGYVEDFSVQEEGGKAQLTIGLKYYAGRPVIERIERVSKPGLRVYKGRSDIPHVMNGLGVAIISTPQGLMTDRKARATGVGGEVLCYVA.

The protein belongs to the universal ribosomal protein uS8 family. As to quaternary structure, part of the 30S ribosomal subunit. Contacts proteins S5 and S12.

One of the primary rRNA binding proteins, it binds directly to 16S rRNA central domain where it helps coordinate assembly of the platform of the 30S subunit. The protein is Small ribosomal subunit protein uS8 of Cupriavidus metallidurans (strain ATCC 43123 / DSM 2839 / NBRC 102507 / CH34) (Ralstonia metallidurans).